We begin with the raw amino-acid sequence, 105 residues long: MGETEGKKDEADYKRLQTFPLVRHSDMPEEMRVETMELCVTACEKFSNNNESAAKMIKETMDKKFGSSWHVVIGEGFGFEITHEVKNLLYLYFGGTLAVCVWKCS.

The protein belongs to the dynein light chain family. Consists of at least two heavy chains and a number of intermediate and light chains.

It is found in the cytoplasm. Its subcellular location is the cytoskeleton. It localises to the cilium axoneme. Its function is as follows. Force generating protein of respiratory cilia. Produces force towards the minus ends of microtubules. Dynein has ATPase activity. The sequence is that of Dynein axonemal light chain 4 (DNAL4) from Bos taurus (Bovine).